The primary structure comprises 521 residues: Probable methylmalonate-semialdehyde/malonate-semialdehyde dehydrogenase [acylating], mitochondrial (521 aa).

The NAD(+) site is built by A170, F172, K196, E199, R200, and S249. The Nucleophile role is filled by C304. Residue E404 participates in NAD(+) binding.

This sequence belongs to the aldehyde dehydrogenase family. In terms of assembly, homotetramer.

It is found in the mitochondrion. It catalyses the reaction 2-methyl-3-oxopropanoate + NAD(+) + CoA + H2O = propanoyl-CoA + hydrogencarbonate + NADH + H(+). The catalysed reaction is 3-oxopropanoate + NAD(+) + CoA + H2O = hydrogencarbonate + acetyl-CoA + NADH + H(+). Functionally, probable malonate and methylmalonate semialdehyde dehydrogenase involved in the catabolism of valine, thymine, and compounds catabolized by way of beta-alanine, including uracil and cytidine. The protein is Probable methylmalonate-semialdehyde/malonate-semialdehyde dehydrogenase [acylating], mitochondrial of Anopheles gambiae (African malaria mosquito).